The chain runs to 288 residues: Transmembrane protein 163 (288 aa).

The interval 1–64 is disordered; the sequence is MEPALGSERR…ESGQFSDGLE (64 aa). The Cytoplasmic segment spans residues 1-87; sequence MEPALGSERR…HEAQNYRKKA (87 aa). Residue Ser-11 is modified to Phosphoserine. A compositionally biased stretch (pro residues) spans 12 to 24; the sequence is PPGPGVPRPPPRG. Residues 25 to 42 are compositionally biased toward low complexity; the sequence is HAPSTAAPAPSPAPMSSS. Residues 41-71 form a required for interaction with MCOLN1 region; the sequence is SSVQSDEERQPRISESGQFSDGLEDRGLLES. Ser-45, Ser-54, Ser-56, and Ser-60 each carry phosphoserine. A helical transmembrane segment spans residues 88-108; that stretch reads LWVSWLSIIVTLALAVAAFTV. The Extracellular segment spans residues 109 to 115; sequence SVMRYSA. Residues 116–136 form a helical membrane-spanning segment; sequence SAFGFAFDAILDVLSSAIVLW. The Cytoplasmic segment spans residues 137–149; that stretch reads RYSNAAAVHSANR. Residues 150 to 170 traverse the membrane as a helical segment; that stretch reads EYIACVILGVIFLLSSICIVV. At 171 to 186 the chain is on the extracellular side; that stretch reads KAIHDLSTRLLPEVDD. Residues 187–207 traverse the membrane as a helical segment; it reads FLFSVSILSGILCSVLAVLKF. Residues 208–216 lie on the Cytoplasmic side of the membrane; that stretch reads MLGKVLTSR. Residues 217-237 traverse the membrane as a helical segment; that stretch reads ALITDGFNSLVGGVMGFSILL. The Extracellular segment spans residues 238–254; that stretch reads SAEVFKHNAAVWYLDGS. Residues 255–275 traverse the membrane as a helical segment; sequence IGVLIGLTIFAYGVKLLIDMV. The Cytoplasmic segment spans residues 276–288; it reads PRVRQTRHYEMFE.

This sequence belongs to the TMEM163 family. Homodimer. Interacts with MCOLN1. Interacts with SLC30A1, SLC30A2, SLC30A3 and SLC30A4. In terms of tissue distribution, widely expressed, with high expression in the brain, cerebellum, heart, lung and spleen. In the brain, mainly expressed in the glutaminergic neuron subpopulations.

It is found in the cytoplasmic vesicle. Its subcellular location is the secretory vesicle. The protein localises to the synaptic vesicle membrane. The protein resides in the early endosome membrane. It localises to the late endosome membrane. It is found in the lysosome membrane. Its subcellular location is the cell membrane. It carries out the reaction Zn(2+)(in) = Zn(2+)(out). Functionally, zinc ion transporter that mediates zinc efflux and plays a crucial role in intracellular zinc homeostasis. Binds the divalent cations Zn(2+), Ni(2+), and to a minor extent Cu(2+). Is a functional modulator of P2X purinoceptors, including P2RX1, P2RX3, P2RX4 and P2RX7. Plays a role in central nervous system development and is required for myelination, and survival and proliferation of oligodendrocytes. The sequence is that of Transmembrane protein 163 (Tmem163) from Mus musculus (Mouse).